A 340-amino-acid chain; its full sequence is Ketol-acid reductoisomerase (NADP(+)) (340 aa).

Positions 3–182 (VQMEYEKDVK…GAARVGLLET (180 aa)) constitute a KARI N-terminal Rossmann domain. NADP(+)-binding positions include 26-29 (YGSQ), R49, S53, and 83-86 (DEIQ). Residue H108 is part of the active site. NADP(+) is bound at residue G134. The region spanning 183-328 (TYKEETEEDL…AELRKAMPFV (146 aa)) is the KARI C-terminal knotted domain. D191, E195, E227, and E231 together coordinate Mg(2+). S252 contacts substrate.

The protein belongs to the ketol-acid reductoisomerase family. The cofactor is Mg(2+).

It carries out the reaction (2R)-2,3-dihydroxy-3-methylbutanoate + NADP(+) = (2S)-2-acetolactate + NADPH + H(+). It catalyses the reaction (2R,3R)-2,3-dihydroxy-3-methylpentanoate + NADP(+) = (S)-2-ethyl-2-hydroxy-3-oxobutanoate + NADPH + H(+). It participates in amino-acid biosynthesis; L-isoleucine biosynthesis; L-isoleucine from 2-oxobutanoate: step 2/4. It functions in the pathway amino-acid biosynthesis; L-valine biosynthesis; L-valine from pyruvate: step 2/4. Its function is as follows. Involved in the biosynthesis of branched-chain amino acids (BCAA). Catalyzes an alkyl-migration followed by a ketol-acid reduction of (S)-2-acetolactate (S2AL) to yield (R)-2,3-dihydroxy-isovalerate. In the isomerase reaction, S2AL is rearranged via a Mg-dependent methyl migration to produce 3-hydroxy-3-methyl-2-ketobutyrate (HMKB). In the reductase reaction, this 2-ketoacid undergoes a metal-dependent reduction by NADPH to yield (R)-2,3-dihydroxy-isovalerate. The sequence is that of Ketol-acid reductoisomerase (NADP(+)) from Streptococcus thermophilus (strain CNRZ 1066).